Here is a 160-residue protein sequence, read N- to C-terminus: Protein shisa-like-2B (160 aa).

A helical transmembrane segment spans residues 65–85 (IGALIGLGIAALVLLAFVISV).

The protein belongs to the shisa family.

The protein resides in the membrane. The polypeptide is Protein shisa-like-2B (Homo sapiens (Human)).